Consider the following 1053-residue polypeptide: Polyphosphate kinase (1053 aa).

Disordered stretches follow at residues 23-155, 200-245, and 302-328; these read LKIN…QLME, VQNP…TKSK, and NNNNNDFKSSTMIGKPFSSGGDGSTSP. Over residues 32–50 the composition is skewed to low complexity; that stretch reads STTTTTSTTTTTTTTTSTS. Positions 81 to 102 are enriched in acidic residues; it reads VDFEDDYDEESSSFDEEDEDSA. Over residues 143 to 155 the composition is skewed to polar residues; it reads TTANPVQNCQLME. Low complexity predominate over residues 215–239; that stretch reads SSGSSSSSSSNNNNSNSNSNGNCNS. Histidine 800 acts as the Phosphohistidine intermediate in catalysis. The segment at 1027–1053 is disordered; it reads RSSPIDEDSQTQFMNQTNQKHPVIWSK. The segment covering 1036–1046 has biased composition (polar residues); that stretch reads QTQFMNQTNQK.

Belongs to the polyphosphate kinase 1 (PPK1) family. Hexamer. May form higher oligomeric structures in the presence of ATP.

It is found in the vesicle. The enzyme catalyses [phosphate](n) + ATP = [phosphate](n+1) + ADP. In terms of biological role, catalyzes the reversible transfer of the terminal phosphate of ATP to form a long-chain polyphosphate (polyP). Produces polyP in a broad range of chain lengths (50-300 Pi residues). Involved in development (growth and fruiting body formation), sporulation, phagocytosis, cell division and the late stages of cytokinesis. The chain is Polyphosphate kinase (ppkA) from Dictyostelium discoideum (Social amoeba).